Here is a 141-residue protein sequence, read N- to C-terminus: Large ribosomal subunit protein uL16 (141 aa).

It belongs to the universal ribosomal protein uL16 family. Part of the 50S ribosomal subunit.

In terms of biological role, binds 23S rRNA and is also seen to make contacts with the A and possibly P site tRNAs. The protein is Large ribosomal subunit protein uL16 of Geobacillus kaustophilus (strain HTA426).